The following is a 383-amino-acid chain: S-adenosylmethionine synthase (383 aa).

ATP is bound at residue His-15. Mg(2+) is bound at residue Asp-17. Position 43 (Glu-43) interacts with K(+). 2 residues coordinate L-methionine: Glu-56 and Gln-99. The tract at residues 99–109 is flexible loop; it reads QSPDINQGVDR. Residues 164–166, 230–231, Asp-239, 245–246, Ala-262, and Lys-266 each bind ATP; these read DAK, RF, and RK. Asp-239 is a binding site for L-methionine. Lys-270 is a binding site for L-methionine.

This sequence belongs to the AdoMet synthase family. Homotetramer; dimer of dimers. It depends on Mg(2+) as a cofactor. K(+) serves as cofactor.

The protein localises to the cytoplasm. The catalysed reaction is L-methionine + ATP + H2O = S-adenosyl-L-methionine + phosphate + diphosphate. It participates in amino-acid biosynthesis; S-adenosyl-L-methionine biosynthesis; S-adenosyl-L-methionine from L-methionine: step 1/1. Functionally, catalyzes the formation of S-adenosylmethionine (AdoMet) from methionine and ATP. The overall synthetic reaction is composed of two sequential steps, AdoMet formation and the subsequent tripolyphosphate hydrolysis which occurs prior to release of AdoMet from the enzyme. This chain is S-adenosylmethionine synthase, found in Shewanella baltica (strain OS223).